We begin with the raw amino-acid sequence, 290 residues long: Ribosomal protein L11 methyltransferase (290 aa).

Residues T136, G157, D179, and N222 each contribute to the S-adenosyl-L-methionine site.

It belongs to the methyltransferase superfamily. PrmA family.

The protein resides in the cytoplasm. The enzyme catalyses L-lysyl-[protein] + 3 S-adenosyl-L-methionine = N(6),N(6),N(6)-trimethyl-L-lysyl-[protein] + 3 S-adenosyl-L-homocysteine + 3 H(+). Methylates ribosomal protein L11. The chain is Ribosomal protein L11 methyltransferase from Porphyromonas gingivalis (strain ATCC BAA-308 / W83).